The chain runs to 664 residues: Phosphomethylpyrimidine synthase (664 aa).

Polar residues-rich tracts occupy residues 1–10 (MSTEPLSINP) and 17–27 (SATQEPSTSSK). Positions 1-37 (MSTEPLSINPLSAKPLSATQEPSTSSKPSRREQRAAA) are disordered. Substrate-binding positions include Asn-261, Met-290, Tyr-319, His-355, 375 to 377 (SRG), 416 to 419 (DGLR), and Glu-455. A Zn(2+)-binding site is contributed by His-459. Tyr-482 contacts substrate. His-523 is a binding site for Zn(2+). Cys-603, Cys-606, and Cys-611 together coordinate [4Fe-4S] cluster.

This sequence belongs to the ThiC family. Homodimer. [4Fe-4S] cluster serves as cofactor.

It carries out the reaction 5-amino-1-(5-phospho-beta-D-ribosyl)imidazole + S-adenosyl-L-methionine = 4-amino-2-methyl-5-(phosphooxymethyl)pyrimidine + CO + 5'-deoxyadenosine + formate + L-methionine + 3 H(+). It functions in the pathway cofactor biosynthesis; thiamine diphosphate biosynthesis. In terms of biological role, catalyzes the synthesis of the hydroxymethylpyrimidine phosphate (HMP-P) moiety of thiamine from aminoimidazole ribotide (AIR) in a radical S-adenosyl-L-methionine (SAM)-dependent reaction. The polypeptide is Phosphomethylpyrimidine synthase (Pectobacterium atrosepticum (strain SCRI 1043 / ATCC BAA-672) (Erwinia carotovora subsp. atroseptica)).